We begin with the raw amino-acid sequence, 1107 residues long: Protein translocase subunit SecA (1107 aa).

Residues glutamine 169, 187–191, and aspartate 688 each bind ATP; that span reads GEGKT. The segment covering 1036–1066 has biased composition (basic and acidic residues); that stretch reads RHAAEQRTDMSKYRTQKDDIEAQQKAQRDAA. The segment at 1036 to 1107 is disordered; sequence RHAAEQRTDM…KFKQCHGRNL (72 aa). The Zn(2+) site is built by cysteine 1091, cysteine 1093, cysteine 1102, and histidine 1103. Over residues 1097 to 1107 the composition is skewed to basic residues; the sequence is KKFKQCHGRNL.

Belongs to the SecA family. In terms of assembly, monomer and homodimer. Part of the essential Sec protein translocation apparatus which comprises SecA, SecYEG and auxiliary proteins SecDF. Other proteins may also be involved. Zn(2+) serves as cofactor.

The protein resides in the cell inner membrane. Its subcellular location is the cytoplasm. It carries out the reaction ATP + H2O + cellular proteinSide 1 = ADP + phosphate + cellular proteinSide 2.. Functionally, part of the Sec protein translocase complex. Interacts with the SecYEG preprotein conducting channel. Has a central role in coupling the hydrolysis of ATP to the transfer of proteins into and across the cell membrane, serving as an ATP-driven molecular motor driving the stepwise translocation of polypeptide chains across the membrane. The protein is Protein translocase subunit SecA of Porphyromonas gingivalis (strain ATCC BAA-308 / W83).